Consider the following 884-residue polypeptide: Alanine--tRNA ligase (884 aa).

Positions 570, 574, 676, and 680 each coordinate Zn(2+).

The protein belongs to the class-II aminoacyl-tRNA synthetase family. It depends on Zn(2+) as a cofactor.

The protein resides in the cytoplasm. The catalysed reaction is tRNA(Ala) + L-alanine + ATP = L-alanyl-tRNA(Ala) + AMP + diphosphate. Catalyzes the attachment of alanine to tRNA(Ala) in a two-step reaction: alanine is first activated by ATP to form Ala-AMP and then transferred to the acceptor end of tRNA(Ala). Also edits incorrectly charged Ser-tRNA(Ala) and Gly-tRNA(Ala) via its editing domain. The polypeptide is Alanine--tRNA ligase (Lawsonia intracellularis (strain PHE/MN1-00)).